A 372-amino-acid chain; its full sequence is Proton-coupled zinc antiporter SLC30A2 (372 aa).

Over 1 to 140 (MEAKEKQHLL…TMNFGWQRAE (140 aa)) the chain is Cytoplasmic. The Mitochondrial localization signal signature appears at 51–54 (HHCH). Residues Cys53, His106, and Asp110 each contribute to the Zn(2+) site. A helical transmembrane segment spans residues 141–161 (ILGALVSVLSIWVVTGVLVYL). Over 162–175 (AVERLISGDYEIDG) the chain is Lumenal. Residues 176 to 196 (GTMLITSGCAVAVNIIMGLTL) traverse the membrane as a helical segment. Residues 197–220 (HQSGHGHSHGTTNQQEENPSVRAA) lie on the Cytoplasmic side of the membrane. A helical membrane pass occupies residues 221 to 241 (FIHVIGDFMQSMGVLVAAYIL). Residues His223 and Asp227 each contribute to the Zn(2+) site. At 242-249 (YFKPEYKY) the chain is on the lumenal side. The chain crosses the membrane as a helical span at residues 250–270 (VDPICTFVFSILVLGTTLTIL). Over 271–304 (RDVILVLMEGTPKGVDFTAVRDLLLSVEGVEALH) the chain is Cytoplasmic. The Lysosomal targeting motif signature appears at 294–295 (LL). Ser296 is subject to Phosphoserine. The Zn(2+) site is built by His304, His321, and Glu355. The helical transmembrane segment at 305 to 325 (SLHIWALTVAQPVLSVHIAIA) threads the bilayer. The Lumenal segment spans residues 326 to 372 (QNTDAQAVLKTASSRLQGKFHFHTVTIQIEDYSEDMKDCQACQGPSD).

The protein belongs to the cation diffusion facilitator (CDF) transporter (TC 2.A.4) family. SLC30A subfamily. In terms of assembly, homodimer. Interacts (via lysosomal targeting motif) with AP3D1; in AP-3-mediated transport to lysosomes. Interacts with TMEM163. Post-translationally, phosphorylated at Ser-296. Phosphorylation at Ser-296 prevents localization to lysosomes. Dephosphorylation of Ser-296 which triggers localization to lysosomes, accumulation of zinc into lysosomes and lysosomal-mediated cell death is induced by TNF-alpha.

The protein resides in the cytoplasmic vesicle. The protein localises to the secretory vesicle membrane. It localises to the zymogen granule membrane. Its subcellular location is the endosome membrane. It is found in the lysosome membrane. The protein resides in the mitochondrion inner membrane. The protein localises to the cell membrane. It catalyses the reaction Zn(2+)(in) + 2 H(+)(out) = Zn(2+)(out) + 2 H(+)(in). In terms of biological role, electroneutral proton-coupled antiporter concentrating zinc ions into a variety of intracellular organelles including endosomes, zymogen granules and mitochondria. Thereby, plays a crucial role in cellular zinc homeostasis to confer upon cells protection against its potential cytotoxicity. Regulates the zinc concentration of milk, through the transport of zinc ions into secretory vesicles of mammary cells. By concentrating zinc ions into lysosomes participates to lysosomal-mediated cell death during early mammary gland involution. Electroneutral proton-coupled antiporter mediating the efflux of zinc ions through the plasma membrane. The polypeptide is Proton-coupled zinc antiporter SLC30A2 (Homo sapiens (Human)).